A 354-amino-acid chain; its full sequence is Inactive ADP-ribosyltransferase arh2 (354 aa).

The protein belongs to the ADP-ribosylglycohydrolase family. As to expression, expressed in heart (at protein level). A short form is detected in both heart and tadpole tail (at protein level).

The protein resides in the cytoplasm. Its subcellular location is the myofibril. It is found in the sarcomere. Required for myofibril assembly and outgrowth of the cardiac chambers in the developing heart. Appears to be catalytically inactive, showing no activity against O-acetyl-ADP-ribose. This is Inactive ADP-ribosyltransferase arh2 (adprhl1) from Xenopus laevis (African clawed frog).